Consider the following 1340-residue polypeptide: Serine/threonine-protein phosphatase 7 long form homolog (1340 aa).

Positions 660 and 662 each coordinate Mn(2+). Residue histidine 722 is the Proton donor of the active site. Mn(2+) is bound at residue histidine 773. Disordered regions lie at residues 788-814, 1012-1093, 1196-1218, and 1266-1340; these read QERN…DRSE, KSMD…SRTR, TDGA…SEDI, and FTNL…DMDS. Over residues 790-799 the composition is skewed to basic residues; that stretch reads RNRKRKRTQK. The segment covering 1018–1027 has biased composition (acidic residues); the sequence is EQMEVDEKDD. Basic and acidic residues predominate over residues 1049–1080; that stretch reads GDRDMVDFSDKTENGSKEADHSETAEISKDLS. Residues 1203–1213 show a composition bias toward polar residues; that stretch reads EPSTSKLNYSE. 2 stretches are compositionally biased toward basic and acidic residues: residues 1266-1289 and 1318-1328; these read FTNL…ERVI and DSVDSKNKGSL.

This sequence belongs to the PPP phosphatase family. PP-7 subfamily. Requires Mn(2+) as cofactor. Expressed in root tips, the shoot apical meristem (SAM), leaf vasculature, hydathodes and mature flowers.

Its subcellular location is the nucleus. It carries out the reaction O-phospho-L-seryl-[protein] + H2O = L-seryl-[protein] + phosphate. The catalysed reaction is O-phospho-L-threonyl-[protein] + H2O = L-threonyl-[protein] + phosphate. Maybe required to maintain cell division activity in meristematic cells. In Arabidopsis thaliana (Mouse-ear cress), this protein is Serine/threonine-protein phosphatase 7 long form homolog.